The following is a 478-amino-acid chain: tRNA (guanine-N(7)-)-methyltransferase non-catalytic subunit TRM82 (478 aa).

4 WD repeats span residues 14-53, 73-113, 217-258, and 263-301; these read SSADGAAWTLFGASGSKIVVQSSNGVASVWSRQAVQVLDP, EQKF…GLQQ, GHVS…HIIE, and GHEEFVSRLCVTRSGLLVSGGGDAHLLVWDWRNFLLNEK.

It belongs to the WD repeat TRM82 family. In terms of assembly, forms a heterodimer with the catalytic subunit TRM8.

It localises to the nucleus. Its pathway is tRNA modification; N(7)-methylguanine-tRNA biosynthesis. Its function is as follows. Required for the formation of N(7)-methylguanine at position 46 (m7G46) in tRNA. In the complex, it is required to stabilize and induce conformational changes of the catalytic subunit. This Phaeosphaeria nodorum (strain SN15 / ATCC MYA-4574 / FGSC 10173) (Glume blotch fungus) protein is tRNA (guanine-N(7)-)-methyltransferase non-catalytic subunit TRM82.